Reading from the N-terminus, the 68-residue chain is Alpha-conotoxin-like Ca1.2 (68 aa).

The first 21 residues, 1–21 (MGMRMMFTVFLLVVLATTVVS), serve as a signal peptide directing secretion. The propeptide occupies 22 to 48 (FTSDRASEGRNAAAKDKASDLVALTVR). 2 disulfide bridges follow: Cys50/Cys56 and Cys51/Cys64. The interval 52-54 (AIR) is lacks the Ser-Xaa-Pro motif that is crucial for potent interaction with nAChR. Tyr63 carries the sulfotyrosine modification. Cys64 is modified (cysteine amide). A propeptide spanning residues 65-68 (GGIY) is cleaved from the precursor.

Belongs to the conotoxin A superfamily. In terms of tissue distribution, expressed by the venom duct.

The protein resides in the secreted. In terms of biological role, alpha-conotoxins act on postsynaptic membranes, they bind to the nicotinic acetylcholine receptors (nAChR) and thus inhibit them. Has possibly a distinct nAChR binding mode from other alpha-conotoxins, due to a different three residue motif (lacks the Ser-Xaa-Pro motif). This Conus caracteristicus (Characteristic cone) protein is Alpha-conotoxin-like Ca1.2.